The following is a 154-amino-acid chain: Urease accessory protein UreE (154 aa).

This sequence belongs to the UreE family.

It is found in the cytoplasm. Involved in urease metallocenter assembly. Binds nickel. Probably functions as a nickel donor during metallocenter assembly. The sequence is that of Urease accessory protein UreE from Prochlorococcus marinus subsp. pastoris (strain CCMP1986 / NIES-2087 / MED4).